Consider the following 156-residue polypeptide: Ribosomal RNA large subunit methyltransferase H (156 aa).

S-adenosyl-L-methionine-binding positions include Leu-73, Gly-104, and 123-128 (ISSMTL).

This sequence belongs to the RNA methyltransferase RlmH family. Homodimer.

It localises to the cytoplasm. It carries out the reaction pseudouridine(1915) in 23S rRNA + S-adenosyl-L-methionine = N(3)-methylpseudouridine(1915) in 23S rRNA + S-adenosyl-L-homocysteine + H(+). Specifically methylates the pseudouridine at position 1915 (m3Psi1915) in 23S rRNA. This Burkholderia lata (strain ATCC 17760 / DSM 23089 / LMG 22485 / NCIMB 9086 / R18194 / 383) protein is Ribosomal RNA large subunit methyltransferase H.